Consider the following 72-residue polypeptide: UPF0352 protein HI_0840 (72 aa).

Belongs to the UPF0352 family.

In Haemophilus influenzae (strain ATCC 51907 / DSM 11121 / KW20 / Rd), this protein is UPF0352 protein HI_0840.